The chain runs to 90 residues: Small ribosomal subunit protein uS17m (90 aa).

It belongs to the universal ribosomal protein uS17 family. In terms of assembly, component of the mitochondrial small ribosomal subunit (mt-SSU). Mature yeast 74S mitochondrial ribosomes consist of a small (37S) and a large (54S) subunit. The 37S small subunit contains a 15S ribosomal RNA (15S mt-rRNA) and at least 32 different proteins. The 54S large subunit contains a 21S rRNA (21S mt-rRNA) and at least 45 different proteins.

The protein resides in the mitochondrion. Functionally, component of the mitochondrial ribosome (mitoribosome), a dedicated translation machinery responsible for the synthesis of mitochondrial genome-encoded proteins, including at least some of the essential transmembrane subunits of the mitochondrial respiratory chain. The mitoribosomes are attached to the mitochondrial inner membrane and translation products are cotranslationally integrated into the membrane. uS17m may have a meiosis-specific role as it accumulates during the middle stage of sporulation. The protein is Small ribosomal subunit protein uS17m of Schizosaccharomyces pombe (strain 972 / ATCC 24843) (Fission yeast).